Reading from the N-terminus, the 227-residue chain is Ribosomal RNA small subunit methyltransferase G (227 aa).

Residues Gly69, Phe74, 119-120, and Arg134 contribute to the S-adenosyl-L-methionine site; that span reads VE.

Belongs to the methyltransferase superfamily. RNA methyltransferase RsmG family.

The protein localises to the cytoplasm. In terms of biological role, specifically methylates the N7 position of a guanine in 16S rRNA. This chain is Ribosomal RNA small subunit methyltransferase G, found in Mycoplasmopsis pulmonis (strain UAB CTIP) (Mycoplasma pulmonis).